The following is a 341-amino-acid chain: Peptidoglycan recognition protein 3 (341 aa).

The signal sequence occupies residues 1 to 17; the sequence is MGTLPWLLAFFILGLQA. 2 N-acetylmuramoyl-L-alanine amidase domains span residues 77–179 and 200–325; these read TIGW…KVCP and PAKY…ILSP. N-linked (GlcNAc...) asparagine glycosylation is present at Asn113. Intrachain disulfides connect Cys178-Cys300, Cys194-Cys238, and Cys214-Cys220. His231, Arg235, and Tyr242 together coordinate peptidoglycan. The tract at residues 264–269 is interaction with murein; it reads HTYGFN.

This sequence belongs to the N-acetylmuramoyl-L-alanine amidase 2 family. In terms of assembly, monomer. Homodimer; disulfide-linked. Heterodimer with PGLYRP4; disulfide-linked. N-glycosylated. In terms of tissue distribution, detected in skin epidermis, eccrine sweat glands and ducts, ciliary body epithelial cells of the eye, in small intestine, colon, stomach and in mature epithelial cells of the tongue (at protein level). Highly expressed in skin and esophagus, expressed also in tonsils and thymus and to a much lesser extent in the stomach, descending colon, rectum and brain.

The protein localises to the secreted. Pattern receptor that binds to murein peptidoglycans (PGN) of Gram-positive bacteria. Has bactericidal activity towards Gram-positive bacteria. May kill Gram-positive bacteria by interfering with peptidoglycan biosynthesis. Also binds to Gram-negative bacteria, and has bacteriostatic activity towards Gram-negative bacteria. Plays a role in innate immunity. The polypeptide is Peptidoglycan recognition protein 3 (PGLYRP3) (Homo sapiens (Human)).